A 490-amino-acid polypeptide reads, in one-letter code: 5'-3' exonuclease PLD3 (490 aa).

The Cytoplasmic portion of the chain corresponds to Met-1–Trp-38. Residues Val-39 to Leu-59 form a helical; Signal-anchor for type II membrane protein membrane-spanning segment. At Trp-60–Leu-490 the chain is on the lumenal side. 2 disulfides stabilise this stretch: Cys-77-Cys-239 and Cys-81-Cys-237. N-linked (GlcNAc...) asparagine glycosylation is found at Asn-97 and Asn-132. One can recognise a PLD phosphodiesterase 1 domain in the interval Thr-196–Ser-223. Residues His-201, Lys-203, and Asp-208 contribute to the active site. His-201 functions as the Proton donor in the catalytic mechanism. Phosphate contacts are provided by His-201 and Lys-203. Residue Asn-218 coordinates phosphate. Asn-236, Asn-284, and Asn-387 each carry an N-linked (GlcNAc...) asparagine glycan. A disulfide bridge links Cys-366 with Cys-487. Residues Tyr-411–Tyr-437 form the PLD phosphodiesterase 2 domain. Residue His-416 participates in phosphate binding. His-416 (nucleophile) is an active-site residue. Phe-438 contributes to the Mg(2+) binding site.

This sequence belongs to the phospholipase D family. In terms of assembly, homodimer. Interacts with APP. N-glycosylated. In terms of processing, proteolytically processed to a soluble form that is stable within endosomes and lysosomes. During transport through the secretory pathway becomes proteolysed by cysteine proteases, thereby releasing a stable soluble lysosomal lumenal polypeptide, whereas the transmembrane-bound fragment is rapidly degraded. Its transport route to lysosomes involves ubiquitination and the ESCRT complex. Post-translationally, ubiquitinated. Ubiquitination mediates sorting into lysosomes.

The protein localises to the endoplasmic reticulum membrane. It is found in the lysosome lumen. Its subcellular location is the early endosome membrane. The protein resides in the late endosome membrane. It localises to the golgi apparatus membrane. The protein localises to the endosome membrane. The catalysed reaction is Exonucleolytic cleavage in the 5'- to 3'-direction to yield nucleoside 3'-phosphates.. The enzyme catalyses a 5'-end 5'-dephospho-ribonucleotidyl-ribonucleotide-RNA + H2O = a ribonucleoside 3'-phosphate + a 5'-end dephospho-ribonucleoside-RNA + H(+). It carries out the reaction a ribonucleoside 3'-phosphate-2'-3'-cyclophospho-GMP + H2O = a ribonucleoside 3'-phosphate + 2',3'-cyclophospho-GMP + H(+). It catalyses the reaction a 5'-end 5'-dephospho-2'-deoxyribonucleotidyl-2'-deoxyribonucleotide in single-stranded DNA + H2O = a 5'-end dephospho-2'-deoxyribonucleoside in single-stranded DNA + a 2'-deoxyribonucleoside 3'-phosphate + H(+). The catalysed reaction is a 5'-end 5'-phospho-2'-deoxyribonucleotide in single-stranded DNA + H2O = a 5'-end 5'-dephospho-2'-deoxyribonucleotide in single-stranded DNA + phosphate. The enzyme catalyses a 3-lyso-sn-glycero-1-phospho-(3'-acyl-1'-sn-glycerol) + a 1-acyl-sn-glycerol = a 3-acyl-sn-glycero-1-phospho-(3'-acyl-1'-sn-glycerol) + glycerol. It carries out the reaction 3-lyso-sn-glycero-1-phospho-(3'-(9Z-octadecenoyl)-1'-sn-glycerol) + 1-(9Z-octadecenoyl)-sn-glycerol = 3-(9Z-octadecenoyl)-sn-glycero-1-phospho-(3'-(9Z-octadecenoyl)-1'-sn-glycerol) + glycerol. Its function is as follows. 5'-&gt;3' exonuclease that hydrolyzes the phosphodiester bond of single-stranded DNA (ssDNA) and RNA molecules to form nucleoside 3'-monophosphates and 5'-end 5'-hydroxy deoxyribonucleotide/ribonucleotide fragments. Partially redundant with PLD4, can cleave all four nucleotides displaying higher efficiency for ssDNA and RNA fragments initiated with uridine and guanosine residues and lower efficiency for cytidine-initiated substrates. As a result, it does not always degrade polynucleotides to the single nucleotide level, it can stall at specific sites sparing certain fragments from exonucleolytic degradation. Processes self and pathogenic ssDNA and RNA molecules that reach the endolysosomal compartment via phagocytosis or autophagy and may serve as 'danger' signals for recognition by innate immune receptors such as toll-like receptors (TLRs). Degrades mitochondrial CpG-rich ssDNA fragments to prevent TLR9 activation and autoinflammatory response, but it can cleave viral RNA to generate ligands for TLR7 activation and initiate antiviral immune responses. In plasmacytoid dendritic cells, it cooperates with endonuclease RNASET2 to release 2',3'-cyclic guanosine monophosphate (2',3'-cGMP), a potent stimulatory ligand for TLR7. Produces 2',3'-cGMPs and cytidine-rich RNA fragments that occupy TLR7 ligand-binding pockets and trigger a signaling-competent state. Can exert polynucleotide phosphatase activity toward 5'-phosphorylated ssDNA substrates although at a slow rate. Transphosphatidylase that catalyzes the exchange with R to S stereo-inversion of the glycerol moiety between (S,R)-lysophosphatidylglycerol (LPG) and monoacylglycerol (MAG) substrates to yield (S,S)-bis(monoacylglycero)phosphate (BMP). Can synthesize a variety of (S,S)-BMPs representing the main phospholipid constituent of lysosomal intralumenal vesicle (ILV) membranes that bind acid hydrolases for lipid degradation. Regulates the homeostasis and interorganellar communication of the endolysosomal system with an overall impact on cellular removal of dysfunctional organelles via autophagy as well as proper protein and lipid turnover. May play a role in myotube formation in response to ER stress. This chain is 5'-3' exonuclease PLD3 (PLD3), found in Bos taurus (Bovine).